The primary structure comprises 193 residues: Large ribosomal subunit protein eL19A (193 aa).

The segment at 156–179 is disordered; sequence QEQQDARRARAKAARQRRAKAVEE. The segment covering 164-174 has biased composition (basic residues); it reads ARAKAARQRRA.

It belongs to the eukaryotic ribosomal protein eL19 family. As to quaternary structure, component of the large ribosomal subunit (LSU). Mature yeast ribosomes consist of a small (40S) and a large (60S) subunit. The 40S small subunit contains 1 molecule of ribosomal RNA (18S rRNA) and at least 33 different proteins. The large 60S subunit contains 3 rRNA molecules (25S, 5.8S and 5S rRNA) and at least 46 different proteins. eL19 lies in close proximity to the binding site for eukaryotic initiation factor eIF4G.

The protein localises to the cytoplasm. Its function is as follows. Component of the ribosome, a large ribonucleoprotein complex responsible for the synthesis of proteins in the cell. The small ribosomal subunit (SSU) binds messenger RNAs (mRNAs) and translates the encoded message by selecting cognate aminoacyl-transfer RNA (tRNA) molecules. The large subunit (LSU) contains the ribosomal catalytic site termed the peptidyl transferase center (PTC), which catalyzes the formation of peptide bonds, thereby polymerizing the amino acids delivered by tRNAs into a polypeptide chain. The nascent polypeptides leave the ribosome through a tunnel in the LSU and interact with protein factors that function in enzymatic processing, targeting, and the membrane insertion of nascent chains at the exit of the ribosomal tunnel. eL19 may play a role in the last stages of translation initiation, in particular subunit joining and shedding/releasing factors. The chain is Large ribosomal subunit protein eL19A (rpl1901) from Schizosaccharomyces pombe (strain 972 / ATCC 24843) (Fission yeast).